A 990-amino-acid chain; its full sequence is Type III restriction-modification enzyme StyLTI Res subunit (990 aa).

A helicase-like domain region spans residues 50–545 (NIDVKMETGT…GLRLPVDENG (496 aa)). A VRR-NUC domain is found at 884-970 (LLKYDYPQQV…RQNINVEFAE (87 aa)). Residues 913-937 (STTPDFVYRIERQDADSVYLLVETK) are endonuclease domain.

It belongs to the type III restriction-modification system Res protein family. Contains two different subunits: Res and Mod. It depends on Mg(2+) as a cofactor. S-adenosyl-L-methionine is required as a cofactor.

It catalyses the reaction Endonucleolytic cleavage of DNA to give specific double-stranded fragments with terminal 5'-phosphates.. In terms of biological role, a type III restriction enzyme that recognizes 2 inversely oriented double-stranded sequences 5'-CAGAG-3' and cleaves DNA 25-27 base pairs downstream. After binding to one recognition site undergoes random one-dimensional diffusion along DNA until it collides with a stationary enzyme bound to the second DNA site, which is when DNA cleavage occurs. DNA restriction requires both the Res and Mod subunits. This Salmonella typhimurium (strain LT2 / SGSC1412 / ATCC 700720) protein is Type III restriction-modification enzyme StyLTI Res subunit.